A 586-amino-acid polypeptide reads, in one-letter code: Asparagine synthetase [glutamine-hydrolyzing] 2 (586 aa).

Catalysis depends on Cys2, which acts as the For GATase activity. The Glutamine amidotransferase type-2 domain maps to 2–185 (CGILAVLGCS…PGHLYSSKEK (184 aa)). Residues 50–54 (RLAIV), 75–77 (NGE), and Asp98 each bind L-glutamine. Residues 193 to 516 (PPWFSEAIPS…PQNSARLSVP (324 aa)) form the Asparagine synthetase domain. Residues Leu231, Val267, and 341 to 342 (SG) each bind ATP.

The enzyme catalyses L-aspartate + L-glutamine + ATP + H2O = L-asparagine + L-glutamate + AMP + diphosphate + H(+). It functions in the pathway amino-acid biosynthesis; L-asparagine biosynthesis; L-asparagine from L-aspartate (L-Gln route): step 1/1. The chain is Asparagine synthetase [glutamine-hydrolyzing] 2 (AS2) from Lotus japonicus (Lotus corniculatus var. japonicus).